We begin with the raw amino-acid sequence, 265 residues long: Hydroxyethylthiazole kinase (265 aa).

Residue Met-36 participates in substrate binding. 2 residues coordinate ATP: Lys-112 and Ser-160. Substrate is bound at residue Gly-187.

This sequence belongs to the Thz kinase family. It depends on Mg(2+) as a cofactor.

The enzyme catalyses 5-(2-hydroxyethyl)-4-methylthiazole + ATP = 4-methyl-5-(2-phosphooxyethyl)-thiazole + ADP + H(+). It functions in the pathway cofactor biosynthesis; thiamine diphosphate biosynthesis; 4-methyl-5-(2-phosphoethyl)-thiazole from 5-(2-hydroxyethyl)-4-methylthiazole: step 1/1. Functionally, catalyzes the phosphorylation of the hydroxyl group of 4-methyl-5-beta-hydroxyethylthiazole (THZ). This chain is Hydroxyethylthiazole kinase, found in Clostridium perfringens (strain ATCC 13124 / DSM 756 / JCM 1290 / NCIMB 6125 / NCTC 8237 / Type A).